Consider the following 160-residue polypeptide: Nucleotide-binding protein Tola_0795 (160 aa).

Belongs to the YajQ family.

Its function is as follows. Nucleotide-binding protein. The polypeptide is Nucleotide-binding protein Tola_0795 (Tolumonas auensis (strain DSM 9187 / NBRC 110442 / TA 4)).